The following is a 77-amino-acid chain: U10-lycotoxin-Ls1d (77 aa).

The signal sequence occupies residues M1–A20. Positions E21–R26 are excised as a propeptide.

The protein belongs to the neurotoxin 19 (CSTX) family. 09 (U10-Lctx) subfamily. Contains 4 disulfide bonds. In terms of tissue distribution, expressed by the venom gland.

Its subcellular location is the secreted. In Lycosa singoriensis (Wolf spider), this protein is U10-lycotoxin-Ls1d.